Here is a 1527-residue protein sequence, read N- to C-terminus: Rho guanine nucleotide exchange factor 11 (1527 aa).

The disordered stretch occupies residues 1-56 (MSIRLPHSIDRSASKKQSHLSSPIASWLSSLSSLGDSTPERTSPSHHRQPSDTSET). S2, S30, S32, and S51 each carry phosphoserine. Positions 19–37 (HLSSPIASWLSSLSSLGDS) are enriched in low complexity. One can recognise a PDZ domain in the interval 64–143 (CVIIQKDQHG…LTLLGSSPPS (80 aa)). The interval 216 to 247 (PCGETSQRTCEGRLSVDSQEADSGLDSGTERF) is disordered. Phosphoserine occurs at positions 262 and 268. Phosphothreonine is present on T271. Residues S272 and S288 each carry the phosphoserine modification. Residues 323–503 (ESDIIFQDLE…NTFMSHAGIR (181 aa)) enclose the RGSL domain. Residues 461 to 487 (LRERQMAEKQLAALGDILSKYEEDRSA) adopt a coiled-coil conformation. 2 disordered regions span residues 506 to 569 (ESRS…QSIK) and 582 to 687 (NSHQ…GRRS). The segment covering 509-519 (SSCTAEKTQSA) has biased composition (polar residues). 2 stretches are compositionally biased toward basic and acidic residues: residues 539–551 (SKKE…DKKR) and 624–645 (KGRE…RSDV). Phosphoserine is present on residues S643 and S671. Positions 656-672 (LHQSASSSASSLSTRSL) are enriched in low complexity. T676 and T680 each carry phosphothreonine. Residues 742 to 931 (DRQEVINELF…REILKFVNEA (190 aa)) enclose the DH domain. Positions 973–1087 (KMIHEGPLTW…WMELLEEAVQ (115 aa)) constitute a PH domain. 3 disordered regions span residues 1090–1184 (TKHP…NRGI), 1231–1321 (QAAG…TEPA), and 1379–1411 (AGPL…PQPY). Basic and acidic residues predominate over residues 1126–1138 (EVYHTEKEPKKLP). Residues 1242–1251 (PTPSVVSITS) are compositionally biased toward polar residues. Phosphoserine is present on residues S1299 and S1304. The segment covering 1312–1321 (AAEAASTEPA) has biased composition (low complexity). A phosphoserine mark is found at S1462 and S1463. 2 positions are modified to phosphothreonine: T1467 and T1480. The tract at residues 1480–1527 (TDYSLSPPAKEALASDSQNGQEQGSCPEEGSDIALEDSATDTAVSPGP) is disordered. S1485 bears the Phosphoserine mark. Residues 1494–1503 (SDSQNGQEQG) are compositionally biased toward polar residues. Over residues 1508-1518 (EGSDIALEDSA) the composition is skewed to acidic residues.

In terms of assembly, interacts with RHOA, GNA13 and SLC1A6. Interacts with GNA12, PLXNB1 and PLXNB2. Interacts (via DH domain) with GCSAM (via C-terminus). Found in a complex with ARHGEF11 and ARHGEF12; binding to ARHGEF11 and ARHGEF12 enhances CDC42 GEF activity of PLEKHG4B, and PLEKHG4B, in turn, inhibits ARHGEF11- and ARHGEF12-mediated RHOA activation. Phosphorylated by MAP kinase p38 (MAPK11, MAPK12, MAPK13 and/or MAPK14). Post-translationally, ubiquitinated by the BCR(KLHL20) E3 ubiquitin ligase complex when previously phosphorylated by MAP kinase p38 (MAPK11, MAPK12, MAPK13 and/or MAPK14), leading to its degradation, thereby restricting RhoA activity and facilitating growth cone spreading and neurite outgrowth.

The protein resides in the cytoplasm. It is found in the membrane. In terms of biological role, may play a role in the regulation of RhoA GTPase by guanine nucleotide-binding alpha-12 (GNA12) and alpha-13 (GNA13). Acts as guanine nucleotide exchange factor (GEF) for RhoA GTPase and may act as GTPase-activating protein (GAP) for GNA12 and GNA13. Involved in neurotrophin-induced neurite outgrowth. The polypeptide is Rho guanine nucleotide exchange factor 11 (Arhgef11) (Rattus norvegicus (Rat)).